The primary structure comprises 427 residues: Inward rectifier potassium channel 2 (427 aa).

Over 1–81 (MGSVRTNRYS…IFTTCVDIRW (81 aa)) the chain is Cytoplasmic. Residues 82-106 (RWMLVIFCLTFILSWLFFGCVFWLI) traverse the membrane as a helical segment. Topologically, residues 107–128 (ALLHGDLENQENNKPCVSQVSS) are extracellular. The segment at residues 129–140 (FTAAFLFSIETQ) is an intramembrane region (helical; Pore-forming). The segment at residues 141-147 (TTIGYGF) is an intramembrane region (pore-forming). Positions 142-147 (TIGYGF) match the Selectivity filter motif. Residues 148–156 (RCVTDECPI) are Extracellular-facing. The helical transmembrane segment at 157–178 (AVFMVVFQSIVGCIIDAFIIGA) threads the bilayer. Over 179–427 (VMAKMAKPKK…PRPLRRESEI (249 aa)) the chain is Cytoplasmic. Residues 181–208 (AKMAKPKKRNETLVFSHNAVVAMRDGKL) form a polyphosphoinositide (PIP2)-binding region. The disordered stretch occupies residues 386-427 (EEDEIDTGVPESTSTDTHPDMDHHNQAGVPLEPRPLRRESEI). Residues 425–427 (SEI) carry the PDZ-binding motif.

This sequence belongs to the inward rectifier-type potassium channel (TC 1.A.2.1) family. KCNJ2 subfamily. In terms of assembly, homotetramer. Homomultimeric and heteromultimeric association with KCNJ4/Kir2.3, resulting in an enhanced G-protein-induced current. Associates, via its PDZ-recognition domain, with a complex containing LIN7A, LIN7B, LIN7C, DLG1, CASK and APBA1. In terms of tissue distribution, found in the apical basilar papilla of the inner ear, brain, muscle, cerebellum, heart and liver.

The protein resides in the cell membrane. It localises to the sarcolemma. The protein localises to the T-tubule. The enzyme catalyses K(+)(in) = K(+)(out). Its activity is regulated as follows. Activated by phosphatidylinositol 4,5 biphosphate (PtdIns(4,5)P2). Functionally, inward rectifier potassium channels are characterized by a greater tendency to allow potassium to flow into the cell rather than out of it. Their voltage dependence is regulated by the concentration of extracellular potassium; as external potassium is raised, the voltage range of the channel opening shifts to more positive voltages. The inward rectification is mainly due to the blockage of outward current by internal magnesium. Can be blocked by external barium. Probably participates in establishing action potential waveform and excitability of neuronal and muscle tissues. The sequence is that of Inward rectifier potassium channel 2 (KCNJ2) from Gallus gallus (Chicken).